The primary structure comprises 158 residues: Phosphopantetheine adenylyltransferase (158 aa).

S8 lines the substrate pocket. ATP is bound by residues 8–9 (SF) and H16. Positions 40, 72, and 86 each coordinate substrate. ATP contacts are provided by residues 87–89 (GLR), E97, and 122–128 (HSFLSSS).

The protein belongs to the bacterial CoaD family. In terms of assembly, homohexamer. Mg(2+) is required as a cofactor.

It is found in the cytoplasm. It carries out the reaction (R)-4'-phosphopantetheine + ATP + H(+) = 3'-dephospho-CoA + diphosphate. It functions in the pathway cofactor biosynthesis; coenzyme A biosynthesis; CoA from (R)-pantothenate: step 4/5. Its function is as follows. Reversibly transfers an adenylyl group from ATP to 4'-phosphopantetheine, yielding dephospho-CoA (dPCoA) and pyrophosphate. The protein is Phosphopantetheine adenylyltransferase of Prochlorococcus marinus (strain NATL2A).